The primary structure comprises 278 residues: S-formylglutathione hydrolase YeiG (278 aa).

Active-site charge relay system residues include S145, D223, and H256.

It belongs to the esterase D family.

The catalysed reaction is S-formylglutathione + H2O = formate + glutathione + H(+). Serine hydrolase involved in the detoxification of formaldehyde. Hydrolyzes S-formylglutathione to glutathione and formate. The chain is S-formylglutathione hydrolase YeiG (yeiG) from Shigella dysenteriae serotype 1 (strain Sd197).